We begin with the raw amino-acid sequence, 525 residues long: MSDIHEHKILILDFGSQYTQLIARRIREIGVYCELWAWDVTEAQIREFAPNGIILAGGPESVTAENSPRAPEYVFTAGVPVLGICYGMQTMSEQLGGKVIQGVGEGEFGYAQIEMLTDSLLFKGIEDAVNSEGKPLLDVWMSHGDKVSAIPEGFVAVAKTDTCPFAAMANEEKQFFGVQFHPEVTHTRQGMRMLSHFALDICGCAANWKPSSIIEDAIERLKKQIGDDEVILGLSGGVDSSVVAMLLHRAIGKKLTCVFVDNGLLRLNEAEQVMEMFGDHFGLNIIHVDAENRFLDAMKGEADPEAKRKIIGRVFVEIFDEESKKCANAKWLAQGTIYPDVIESAGSATGKAHVIKSHHNVGGLPDDMELGLVEPLRELFKDEVRKIGLELGLPYNMLYRHPFPGPGLGVRVLGEVKKEYCDLLRRADAIFIEELHKADLYNKVSQAFTVFLPVRSVGVMGDGRKYDWVVSLRAVETVDFMTAHWAHLPYDFLGRVSNRIINEVDGISRVVYDISGKPPATIEWE.

Positions Lys8 to Asn207 constitute a Glutamine amidotransferase type-1 domain. Cys85 serves as the catalytic Nucleophile. Residues His181 and Glu183 contribute to the active site. One can recognise a GMPS ATP-PPase domain in the interval Trp208 to Arg400. Ser235–Ser241 is an ATP binding site.

In terms of assembly, homodimer.

The catalysed reaction is XMP + L-glutamine + ATP + H2O = GMP + L-glutamate + AMP + diphosphate + 2 H(+). It functions in the pathway purine metabolism; GMP biosynthesis; GMP from XMP (L-Gln route): step 1/1. Its function is as follows. Catalyzes the synthesis of GMP from XMP. This Shewanella baltica (strain OS155 / ATCC BAA-1091) protein is GMP synthase [glutamine-hydrolyzing].